The primary structure comprises 266 residues: Ras-like protein family member 12 (266 aa).

GTP-binding positions include 27–34 (GRRGAGKS), 74–78 (DTADL), and 134–137 (NKLD).

It belongs to the small GTPase superfamily. Ras family.

It catalyses the reaction GTP + H2O = GDP + phosphate + H(+). This chain is Ras-like protein family member 12 (Rasl12), found in Mus musculus (Mouse).